The chain runs to 656 residues: Probable serine/threonine-protein kinase sky1 (656 aa).

The segment at 1 to 127 is disordered; sequence MSDIQQDSTS…KQGGYHPVRR (127 aa). The segment covering 16–48 has biased composition (gly residues); the sequence is TSLGGTSLGGTSLGGTSLGGTSLGGTSLGGTSL. Composition is skewed to low complexity over residues 49 to 64 and 72 to 89; these read GGST…STNS and TSSN…NNNE. Polar residues predominate over residues 96–108; it reads AGSSNKSFMPLNN. Residues 135–648 form the Protein kinase domain; sequence YQVVDKLGWG…AKDCLNHTWL (514 aa). 141-149 provides a ligand contact to ATP; sequence LGWGHFSTV. The interval 157 to 185 is disordered; sequence TPITTSSSSSSTTTTTTSSSSNGNGNGNG. Low complexity predominate over residues 160 to 179; that stretch reads TTSSSSSSTTTTTTSSSSNG. An ATP-binding site is contributed by Lys-197. Catalysis depends on Asp-298, which acts as the Proton acceptor. Residues 330 to 454 form a disordered region; sequence RTSSSNKQSQ…TTATATATTT (125 aa). Residues 332–355 show a composition bias toward low complexity; it reads SSSNKQSQQQQQPQQQQSQQNIND. Composition is skewed to basic and acidic residues over residues 383–401 and 413–440; these read SNRD…DDNK and ENTD…KEEP. Residues 441 to 454 show a composition bias toward low complexity; the sequence is TTTTTTATATATTT.

It belongs to the protein kinase superfamily. CMGC Ser/Thr protein kinase family.

The catalysed reaction is L-seryl-[protein] + ATP = O-phospho-L-seryl-[protein] + ADP + H(+). It catalyses the reaction L-threonyl-[protein] + ATP = O-phospho-L-threonyl-[protein] + ADP + H(+). The sequence is that of Probable serine/threonine-protein kinase sky1 (sky1) from Dictyostelium discoideum (Social amoeba).